A 350-amino-acid chain; its full sequence is Protein-glutamate methylesterase/protein-glutamine glutaminase (350 aa).

Residues 5–122 (KVLCVDDSAL…RDGLIEYSEV (118 aa)) enclose the Response regulatory domain. Asp-56 bears the 4-aspartylphosphate mark. The 195-residue stretch at 152 to 346 (PFASSEKLVI…ERILTRLGDR (195 aa)) folds into the CheB-type methylesterase domain. Active-site residues include Ser-165, His-191, and Asp-288.

It belongs to the CheB family. In terms of processing, phosphorylated by CheA. Phosphorylation of the N-terminal regulatory domain activates the methylesterase activity.

The protein localises to the cytoplasm. The catalysed reaction is [protein]-L-glutamate 5-O-methyl ester + H2O = L-glutamyl-[protein] + methanol + H(+). The enzyme catalyses L-glutaminyl-[protein] + H2O = L-glutamyl-[protein] + NH4(+). In terms of biological role, involved in chemotaxis. Part of a chemotaxis signal transduction system that modulates chemotaxis in response to various stimuli. Catalyzes the demethylation of specific methylglutamate residues introduced into the chemoreceptors (methyl-accepting chemotaxis proteins or MCP) by CheR. Also mediates the irreversible deamidation of specific glutamine residues to glutamic acid. This chain is Protein-glutamate methylesterase/protein-glutamine glutaminase, found in Bordetella pertussis (strain Tohama I / ATCC BAA-589 / NCTC 13251).